The sequence spans 346 residues: Phosphoribosylformylglycinamidine cyclo-ligase (346 aa).

Belongs to the AIR synthase family.

The protein resides in the cytoplasm. It carries out the reaction 2-formamido-N(1)-(5-O-phospho-beta-D-ribosyl)acetamidine + ATP = 5-amino-1-(5-phospho-beta-D-ribosyl)imidazole + ADP + phosphate + H(+). The protein operates within purine metabolism; IMP biosynthesis via de novo pathway; 5-amino-1-(5-phospho-D-ribosyl)imidazole from N(2)-formyl-N(1)-(5-phospho-D-ribosyl)glycinamide: step 2/2. The chain is Phosphoribosylformylglycinamidine cyclo-ligase from Alteromonas mediterranea (strain DSM 17117 / CIP 110805 / LMG 28347 / Deep ecotype).